The chain runs to 2208 residues: RNA-directed RNA polymerase L (2208 aa).

The endonuclease stretch occupies residues 26-284 (KDALLSQVHP…LHQDSDTINC (259 aa)). Residues glutamate 51, aspartate 89, and glutamate 102 each contribute to the Mn(2+) site. Lysine 115 is an active-site residue. The 197-residue stretch at 1171-1367 (CDMKMAVNNG…YLSSKLNKFV (197 aa)) folds into the RdRp catalytic domain. Position 1329 (aspartate 1329) interacts with Mg(2+).

The protein belongs to the Bunyavirales RNA polymerase family. Homomultimer; the oligomeric structure is essential for the polymerase activity. Interacts with nucleoprotein N. Interacts with protein Z; this interaction inhibits viral transcription and replication, Z partially blocks the product exit tunnel for the releasing nascent RNA product. It depends on Mn(2+) as a cofactor. Requires Mg(2+) as cofactor.

The protein localises to the virion. Its subcellular location is the host cytoplasm. The catalysed reaction is RNA(n) + a ribonucleoside 5'-triphosphate = RNA(n+1) + diphosphate. Its function is as follows. RNA-dependent RNA polymerase, which is responsible for the replication and transcription of the viral RNA genome using antigenomic RNA as an intermediate. During transcription, synthesizes subgenomic RNAs and assures their capping by a cap-snatching mechanism, which involves the endonuclease activity cleaving the host capped pre-mRNAs. These short capped RNAs are then used as primers for viral transcription. The 3'-end of subgenomic mRNAs molecules are heterogeneous and not polyadenylated. The replicase function is to direct synthesis of antigenomic and genomic RNA which are encapsidated and non capped. As a consequence of the use of the same enzyme for both transcription and replication, these mechanisms need to be well coordinated. These processes may be regulated by proteins N and Z in a dose-dependent manner. Z protein inhibits the viral polymerase L und thus the viral transcription and RNA synthesis. The polypeptide is RNA-directed RNA polymerase L (Homo sapiens (Human)).